The primary structure comprises 470 residues: FAD-dependent monooxygenase nvfK (470 aa).

The first 23 residues, 1 to 23 (MEKAKFKVVIVGGSITGLTLAHC), serve as a signal peptide directing secretion. 3 residues coordinate FAD: Glu35, Gly49, and Arg108. Asn121 carries N-linked (GlcNAc...) asparagine glycosylation. Tyr216 is a catalytic residue. FAD contacts are provided by Asp308 and Ala321. Residues 450–470 (ILMSIVLVAPAWVYIFSSLVW) traverse the membrane as a helical segment.

It belongs to the paxM FAD-dependent monooxygenase family. FAD serves as cofactor.

Its subcellular location is the membrane. It carries out the reaction (3R)-3-farnesyl-6-hydroxy-2,3,5-trimethyl-4-oxocyclohexa-1,5-diene-1-carboxylate + 2-oxoglutarate + O2 = (3R)-[(10S)-11-epoxyfarnesyl]-2,3,5-trimethyl-6-oxido-4-oxocyclohexa-1,5-diene-1-carboxylate + succinate + CO2. The protein operates within secondary metabolite biosynthesis; terpenoid biosynthesis. Its function is as follows. FAD-dependent monooxygenase; part of the gene cluster that mediates the biosynthesis of novofumigatonin, a heavily oxygenated meroterpenoid containing a unique orthoester moiety. The first step of the pathway is the synthesis of 3,5-dimethylorsellinic acid (DMOA) by the polyketide synthase nvfA via condensation of one acetyl-CoA starter unit with 3 malonyl-CoA units and 2 methylations. DMOA is then converted to farnesyl-DMOA by the farnesyltransferase nvfB. Epoxydation by FAD-dependent monooxygenase nvfK, followed by a protonation-initiated cyclization catalyzed by the terpene cyclase nvfL leads to the production of asnavolin H. The short chain dehydrogenase nvfC then as a 3-OH dehydrogenase of asnovolin H to yield chemesin D. There are two branches to synthesize asnovolin A from chemesin D. In one branch, chemesin D undergoes Baeyer-Villiger oxidation by nvfH, methylation by nvfJ, and enoyl reduction by the nvfM D enoylreductase that reduces the double bond between C-5'and C-6', to form respectively asnovolin I, asnovolin K, and asnovolin A. In the other branch, the methylation precedes the Baeyer-Villiger oxidation and the enoyl reduction to yield asnovolin A via the asnovolin J intermediate. Asnovolin A is further converted to fumigatonoid A by the Fe(II)/2-oxoglutarate-dependent dioxygenase nvfI that catalyzes an endoperoxidation reaction. The alpha/beta hydrolase nvfD then acts as an epimerase that converts fumigatonoid A to its C-5' epimer, which then undergoes spontaneous or nvfD-catalyzed lactonization. The following step utilizes the ketoreductase nvfG to produce fumigatonoid B. The dioxygenase nvfE further converts fumigatonoid B into fumigatonoid C. Finally the Fe(II)/2-oxoglutarate-dependent dioxygenase nvfF catalyzes two rounds of oxidation to transform fumigatonoid C into the end product, novofumigatonin A. The chain is FAD-dependent monooxygenase nvfK from Aspergillus novofumigatus (strain IBT 16806).